A 164-amino-acid polypeptide reads, in one-letter code: ATP synthase subunit b 1 (164 aa).

A helical membrane pass occupies residues 8 to 28; it reads AETWVAVGFAILMVVFVYFGV.

Belongs to the ATPase B chain family. In terms of assembly, F-type ATPases have 2 components, F(1) - the catalytic core - and F(0) - the membrane proton channel. F(1) has five subunits: alpha(3), beta(3), gamma(1), delta(1), epsilon(1). F(0) has three main subunits: a(1), b(2) and c(10-14). The alpha and beta chains form an alternating ring which encloses part of the gamma chain. F(1) is attached to F(0) by a central stalk formed by the gamma and epsilon chains, while a peripheral stalk is formed by the delta and b chains.

The protein localises to the cell inner membrane. F(1)F(0) ATP synthase produces ATP from ADP in the presence of a proton or sodium gradient. F-type ATPases consist of two structural domains, F(1) containing the extramembraneous catalytic core and F(0) containing the membrane proton channel, linked together by a central stalk and a peripheral stalk. During catalysis, ATP synthesis in the catalytic domain of F(1) is coupled via a rotary mechanism of the central stalk subunits to proton translocation. Its function is as follows. Component of the F(0) channel, it forms part of the peripheral stalk, linking F(1) to F(0). This is ATP synthase subunit b 1 from Rhodopseudomonas palustris (strain BisA53).